The sequence spans 142 residues: Galactose-6-phosphate isomerase subunit LacA (142 aa).

This sequence belongs to the LacAB/RpiB family. As to quaternary structure, heteromultimeric protein consisting of LacA and LacB.

It catalyses the reaction aldehydo-D-galactose 6-phosphate = keto-D-tagatose 6-phosphate. Its pathway is carbohydrate metabolism; D-galactose 6-phosphate degradation; D-tagatose 6-phosphate from D-galactose 6-phosphate: step 1/1. The protein is Galactose-6-phosphate isomerase subunit LacA of Clostridium acetobutylicum (strain ATCC 824 / DSM 792 / JCM 1419 / IAM 19013 / LMG 5710 / NBRC 13948 / NRRL B-527 / VKM B-1787 / 2291 / W).